A 334-amino-acid chain; its full sequence is Ribosomal RNA large subunit methyltransferase F (334 aa).

The segment at 1 to 25 (MPRPSSPRPDAERKSASPLHPRNRH) is disordered.

This sequence belongs to the methyltransferase superfamily. METTL16/RlmF family.

The protein resides in the cytoplasm. The catalysed reaction is adenosine(1618) in 23S rRNA + S-adenosyl-L-methionine = N(6)-methyladenosine(1618) in 23S rRNA + S-adenosyl-L-homocysteine + H(+). In terms of biological role, specifically methylates the adenine in position 1618 of 23S rRNA. The sequence is that of Ribosomal RNA large subunit methyltransferase F from Pseudomonas paraeruginosa (strain DSM 24068 / PA7) (Pseudomonas aeruginosa (strain PA7)).